Reading from the N-terminus, the 490-residue chain is UDP-N-acetylmuramate--L-alanine ligase (490 aa).

126–132 (GTHGKTT) contributes to the ATP binding site.

This sequence belongs to the MurCDEF family.

It localises to the cytoplasm. It catalyses the reaction UDP-N-acetyl-alpha-D-muramate + L-alanine + ATP = UDP-N-acetyl-alpha-D-muramoyl-L-alanine + ADP + phosphate + H(+). It participates in cell wall biogenesis; peptidoglycan biosynthesis. Its function is as follows. Cell wall formation. This is UDP-N-acetylmuramate--L-alanine ligase from Sodalis glossinidius (strain morsitans).